The chain runs to 182 residues: MKNIFLDLDNTLICAEPFEDITDLGRFKERASHFDFKNMEDYYLICGRPYLQPFLDYLFKNFNVHIWTAASKGYASFIIEEFILKKDPSRKINLVLFDHHCRVSKRVYKKEKASKKLEMLWTIWKLQEFDKENTFIIDDLEEVKESQVKNCFSVKPFFFMENDSEYDQELMRLKDVLNRHLN.

In terms of domain architecture, FCP1 homology spans 1–180; that stretch reads MKNIFLDLDN…MRLKDVLNRH (180 aa).

The protein belongs to the IIV-6 355R family.

Functionally, may function as a phosphatase. The protein is Putative CTD phosphatase-like protein 355R of Invertebrate iridescent virus 6 (IIV-6).